The sequence spans 106 residues: Cell division topological specificity factor (106 aa).

This sequence belongs to the MinE family.

Its function is as follows. Prevents the cell division inhibition by proteins MinC and MinD at internal division sites while permitting inhibition at polar sites. This ensures cell division at the proper site by restricting the formation of a division septum at the midpoint of the long axis of the cell. In Prochlorococcus marinus (strain SARG / CCMP1375 / SS120), this protein is Cell division topological specificity factor.